The primary structure comprises 206 residues: Macrophage immunometabolism regulator (206 aa).

Met-1 carries the post-translational modification N-acetylmethionine. Positions 1 to 41 are disordered; that stretch reads MEVDINGESRSTLTTLPFPGAEANSPGKAEAEKPRCSSTPC. Ser-25, Ser-140, and Ser-167 each carry phosphoserine.

The protein belongs to the UNC119-binding protein family. As to quaternary structure, interacts with UNC119 and UNC119B; interaction preferentially takes place when UNC119 and UNC119B are unliganded with myristoylated proteins. Phosphorylated. High expression in normal macrophages, monocytes, and cultured rheumatoid arthritis synovial fibroblasts (RASFs), with lower expression in B- and T-cells, and little to no expression in other tissues and cell lines.

The protein resides in the cytoplasm. Its subcellular location is the cell projection. It is found in the cilium. Its function is as follows. Regulates the macrophage function, by enhancing the resolution of inflammation and wound repair functions mediated by M2 macrophages. The regulation of macrophage function is, due at least in part, to its ability to inhibit glycolysis. May also play a role in trafficking of proteins via its interaction with UNC119 and UNC119B cargo adapters: may help the release of UNC119 and UNC119B cargo or the recycling of UNC119 and UNC119B. May play a role in ciliary membrane localization via its interaction with UNC119B and protein transport into photoreceptor cells. The protein is Macrophage immunometabolism regulator of Homo sapiens (Human).